Consider the following 266-residue polypeptide: Undecaprenyl-diphosphatase (266 aa).

8 consecutive transmembrane segments (helical) span residues 1–21 (MMSW…TEFL), 43–63 (ASVF…VIYW), 81–101 (LYGI…GFLF), 107–127 (TLFT…FMLI), 145–165 (LTPK…WPGF), 183–203 (HLAA…ATGY), 219–239 (LFIT…KVFI), and 245–265 (ISLR…YLCI).

This sequence belongs to the UppP family.

Its subcellular location is the cell membrane. It catalyses the reaction di-trans,octa-cis-undecaprenyl diphosphate + H2O = di-trans,octa-cis-undecaprenyl phosphate + phosphate + H(+). Catalyzes the dephosphorylation of undecaprenyl diphosphate (UPP). Confers resistance to bacitracin. The polypeptide is Undecaprenyl-diphosphatase (Lawsonia intracellularis (strain PHE/MN1-00)).